The following is a 135-amino-acid chain: Basic phospholipase A2 KBf-VA (135 aa).

7 disulfide bridges follow: C28-C87, C42-C134, C44-C60, C59-C115, C66-C108, C76-C101, and C94-C106. 3 residues coordinate Ca(2+): Y43, G45, and G47. H63 is a catalytic residue. D64 is a binding site for Ca(2+). Residue D109 is part of the active site.

The protein belongs to the phospholipase A2 family. Group I subfamily. D49 sub-subfamily. Requires Ca(2+) as cofactor. In terms of tissue distribution, expressed by the venom gland.

It localises to the secreted. It carries out the reaction a 1,2-diacyl-sn-glycero-3-phosphocholine + H2O = a 1-acyl-sn-glycero-3-phosphocholine + a fatty acid + H(+). In terms of biological role, snake venom phospholipase A2 (PLA2) that inhibits neuromuscular transmission by blocking acetylcholine release from the nerve termini. PLA2 catalyzes the calcium-dependent hydrolysis of the 2-acyl groups in 3-sn-phosphoglycerides. This chain is Basic phospholipase A2 KBf-VA, found in Bungarus fasciatus (Banded krait).